A 446-amino-acid polypeptide reads, in one-letter code: Mitochondrial distribution and morphology protein 12 (446 aa).

An SMP-LTD domain is found at 1–446 (MSIDINWEAA…VYPSFWTFLV (446 aa)). The span at 75–85 (DNEIGDGEVSD) shows a compositional bias: acidic residues. 3 disordered regions span residues 75 to 106 (DNEI…SAAD), 126 to 145 (PHDV…PIRS), and 188 to 283 (TPLS…RVRE). Basic and acidic residues predominate over residues 126–138 (PHDVPIPSKEDPL). Polar residues predominate over residues 233–246 (TGNSRPSTADTLDS). Basic and acidic residues predominate over residues 260-274 (SSDDAHPNVLPRRDN).

The protein belongs to the MDM12 family. In terms of assembly, component of the ER-mitochondria encounter structure (ERMES) or MDM complex, composed of MMM1, MDM10, MDM12 and MDM34. An MMM1 homodimer associates with one molecule of MDM12 on each side in a pairwise head-to-tail manner, and the SMP-LTD domains of MMM1 and MDM12 generate a continuous hydrophobic tunnel for phospholipid trafficking.

It is found in the mitochondrion outer membrane. The protein localises to the endoplasmic reticulum membrane. Functionally, component of the ERMES/MDM complex, which serves as a molecular tether to connect the endoplasmic reticulum (ER) and mitochondria. Components of this complex are involved in the control of mitochondrial shape and protein biogenesis, and function in nonvesicular lipid trafficking between the ER and mitochondria. MDM12 is required for the interaction of the ER-resident membrane protein MMM1 and the outer mitochondrial membrane-resident beta-barrel protein MDM10. The MDM12-MMM1 subcomplex functions in the major beta-barrel assembly pathway that is responsible for biogenesis of all mitochondrial outer membrane beta-barrel proteins, and acts in a late step after the SAM complex. The MDM10-MDM12-MMM1 subcomplex further acts in the TOM40-specific pathway after the action of the MDM12-MMM1 complex. Essential for establishing and maintaining the structure of mitochondria and maintenance of mtDNA nucleoids. The polypeptide is Mitochondrial distribution and morphology protein 12 (Coccidioides immitis (strain RS) (Valley fever fungus)).